The following is a 3801-amino-acid chain: Lysosomal-trafficking regulator (3801 aa).

A disordered region spans residues 148-173 (KITHRYSVRDARKTQLSTSDSEANSD). Ser-164 carries the post-translational modification Phosphoserine. Thr-165 bears the Phosphothreonine mark. Residue Ser-166 is modified to Phosphoserine. Residues 662–700 (ELSSSLSSPSYRFQGILPSSGSEDLLWKWDALKAYQNFV) form a WD 1 repeat. Residues 1181 to 1190 (AMTEKSHQSA) show a composition bias toward basic and acidic residues. Disordered regions lie at residues 1181 to 1203 (AMTEKSHQSAEELSSQPGDFSEE) and 1221 to 1256 (YEADSESNPEDGETQDDGVDLKSETEGFSASSSPND). The span at 1221–1238 (YEADSESNPEDGETQDDG) shows a compositional bias: acidic residues. Residues 1246 to 1256 (EGFSASSSPND) show a composition bias toward polar residues. Residues Ser-1509 and Ser-1510 each carry the phosphoserine modification. One copy of the WD 2 repeat lies at 1582–1626 (SQENIFLPSKWQHLVLTYLQQPQGKRRIHGKISIWVSGQRKPDVT). Phosphoserine occurs at positions 2105, 2124, 2213, 2217, and 2264. A compositionally biased stretch (basic and acidic residues) spans 2205–2215 (KQLGAEPRSED). Positions 2205–2224 (KQLGAEPRSEDDSPGDESCP) are disordered. Positions 3009 to 3115 (AASESIRVNR…VRDDVYHNIL (107 aa)) constitute a BEACH-type PH domain. In terms of domain architecture, BEACH spans 3120 to 3422 (PNLLEYGNIT…QLFHMAHVSR (303 aa)). WD repeat units follow at residues 3563–3602 (SQQYQVTSCAWVPDSCQLFTGSKCGVITAYTNRFTSSTPS), 3614–3653 (GHTEEITSLFVCKPYSILISVSRDGTCIIWDLNRLCYVQS), 3656–3699 (GHKS…VGHV), 3700–3744 (HCRE…PVRE), and 3749–3788 (KSNKPIISLTFSCDGHHLYTANSDGTVIAWCRKDQQRLKQ).

In terms of assembly, interacts with CPAP, LIP8 and ZNF521. In terms of tissue distribution, abundantly expressed in adult and fetal thymus, peripheral blood leukocytes, bone marrow and several regions of the adult brain.

The protein resides in the cytoplasm. Functionally, adapter protein that regulates and/or fission of intracellular vesicles such as lysosomes. Might regulate trafficking of effectors involved in exocytosis. In cytotoxic T-cells and natural killer (NK) cells, has role in the regulation of size, number and exocytosis of lytic granules. In macrophages and dendritic cells, regulates phagosome maturation by controlling the conversion of early phagosomal compartments into late phagosomes. In macrophages and dendritic cells, specifically involved in TLR3- and TLR4-induced production of pro-inflammatory cytokines by regulating the endosomal TLR3- TICAM1/TRIF and TLR4- TICAM1/TRIF signaling pathways. The chain is Lysosomal-trafficking regulator (LYST) from Homo sapiens (Human).